The chain runs to 512 residues: MADKLIIFDTTLRDGEQSPGASMTKDEKLRIARQLERLKVDVIEAGFAASSNGDFDAVRAIASTIREATICSLARANDRDIARAAQALEGAANARIHIFIATSALHMEKKLRMTPGQVLEQSLQSVRFARNLVADIEFSPEDGYRSDPDFLCRVIEAAIAEGATTINVPDTVGYAIPELYGNFIKMLRERVPNSDKAIWSVHCHNDLGMAVANSLAGVKMGGARQVECTINGLGERAGNCSLEEVVMAVKTRRDYFGLDLGIATQHILAASRMVSQTTGFAVQLNKAIVGANAFAHASGIHQDGVLKARDTYEIMRAQDVGWSANKMVLGKLSGRSAFKQRLQELGVSLDSEAEINLAFARFKELADRKSEIFDEDILALVSDESVSGDNEQYGFVSLFQQSETGKQPHARIVFTVNGQNVHAEAQGNGPVDASLKAIEAHVHSGAEMVLYSVNAISGSTESQGEVTVRLQNSGRIVNGVGADPDIVVASAKAYFSALNKLQNKADRVAAQG.

Residues 5–268 (LIIFDTTLRD…DLGIATQHIL (264 aa)) form the Pyruvate carboxyltransferase domain. The Mn(2+) site is built by Asp14, His202, His204, and Asn239. Residues 394–512 (GFVSLFQQSE…NKADRVAAQG (119 aa)) form a regulatory domain region.

Belongs to the alpha-IPM synthase/homocitrate synthase family. LeuA type 1 subfamily. In terms of assembly, homodimer. Requires Mn(2+) as cofactor.

The protein localises to the cytoplasm. It carries out the reaction 3-methyl-2-oxobutanoate + acetyl-CoA + H2O = (2S)-2-isopropylmalate + CoA + H(+). Its pathway is amino-acid biosynthesis; L-leucine biosynthesis; L-leucine from 3-methyl-2-oxobutanoate: step 1/4. Functionally, catalyzes the condensation of the acetyl group of acetyl-CoA with 3-methyl-2-oxobutanoate (2-ketoisovalerate) to form 3-carboxy-3-hydroxy-4-methylpentanoate (2-isopropylmalate). This chain is 2-isopropylmalate synthase, found in Verminephrobacter eiseniae (strain EF01-2).